The following is a 198-amino-acid chain: Anthranilate synthase component 2 (198 aa).

The Glutamine amidotransferase type-1 domain occupies 2–198 (LLMMIDNYDS…NFLKQTGGRR (197 aa)). Residue 53–55 (GPC) participates in L-glutamine binding. The active-site Nucleophile; for GATase activity is the Cys80. L-glutamine contacts are provided by residues Gln84 and 130 to 131 (SL). Catalysis depends on for GATase activity residues His174 and Glu176.

In terms of assembly, heterotetramer consisting of two non-identical subunits: a beta subunit (TrpG) and a large alpha subunit (TrpE).

It catalyses the reaction chorismate + L-glutamine = anthranilate + pyruvate + L-glutamate + H(+). Its pathway is amino-acid biosynthesis; L-tryptophan biosynthesis; L-tryptophan from chorismate: step 1/5. Its function is as follows. Part of a heterotetrameric complex that catalyzes the two-step biosynthesis of anthranilate, an intermediate in the biosynthesis of L-tryptophan. In the first step, the glutamine-binding beta subunit (TrpG) of anthranilate synthase (AS) provides the glutamine amidotransferase activity which generates ammonia as a substrate that, along with chorismate, is used in the second step, catalyzed by the large alpha subunit of AS (TrpE) to produce anthranilate. In the absence of TrpG, TrpE can synthesize anthranilate directly from chorismate and high concentrations of ammonia. The chain is Anthranilate synthase component 2 (trpG) from Pseudomonas putida (Arthrobacter siderocapsulatus).